Here is a 53-residue protein sequence, read N- to C-terminus: MAKKPWKKKYGYGIRPCQRCGHVGPGLIRKYGLNLCRQCFREIAHKLGFKKLD.

The Zn(2+) site is built by C17, C20, C36, and C39.

Belongs to the universal ribosomal protein uS14 family. Zinc-binding uS14 subfamily. In terms of assembly, part of the 30S ribosomal subunit. Zn(2+) serves as cofactor.

In terms of biological role, binds 16S rRNA, required for the assembly of 30S particles. This is Small ribosomal subunit protein uS14 from Methanocaldococcus jannaschii (strain ATCC 43067 / DSM 2661 / JAL-1 / JCM 10045 / NBRC 100440) (Methanococcus jannaschii).